The following is a 292-amino-acid chain: 4-hydroxy-tetrahydrodipicolinate synthase (292 aa).

T45 lines the pyruvate pocket. The Proton donor/acceptor role is filled by Y133. Residue K161 is the Schiff-base intermediate with substrate of the active site. I203 serves as a coordination point for pyruvate.

Belongs to the DapA family. Homotetramer; dimer of dimers.

Its subcellular location is the cytoplasm. The enzyme catalyses L-aspartate 4-semialdehyde + pyruvate = (2S,4S)-4-hydroxy-2,3,4,5-tetrahydrodipicolinate + H2O + H(+). Its pathway is amino-acid biosynthesis; L-lysine biosynthesis via DAP pathway; (S)-tetrahydrodipicolinate from L-aspartate: step 3/4. Its function is as follows. Catalyzes the condensation of (S)-aspartate-beta-semialdehyde [(S)-ASA] and pyruvate to 4-hydroxy-tetrahydrodipicolinate (HTPA). This is 4-hydroxy-tetrahydrodipicolinate synthase from Vibrio cholerae serotype O1 (strain ATCC 39541 / Classical Ogawa 395 / O395).